Consider the following 774-residue polypeptide: 1,4-alpha-glucan branching enzyme GlgB 1 (774 aa).

The disordered stretch occupies residues 1-66 (MTPRPSSSGP…AEVAVSPAPD (66 aa)). Residues 29 to 40 (KPAKAAKKKAPR) are compositionally biased toward basic residues. The segment covering 41–55 (RTTASANASATTSVS) has biased composition (low complexity). The Nucleophile role is filled by D457. E510 acts as the Proton donor in catalysis. The disordered stretch occupies residues 748 to 774 (YGGGDVVNPDPVKPEPQGGTAARRASG).

Belongs to the glycosyl hydrolase 13 family. GlgB subfamily. In terms of assembly, monomer.

The enzyme catalyses Transfers a segment of a (1-&gt;4)-alpha-D-glucan chain to a primary hydroxy group in a similar glucan chain.. Its pathway is glycan biosynthesis; glycogen biosynthesis. Functionally, catalyzes the formation of the alpha-1,6-glucosidic linkages in glycogen by scission of a 1,4-alpha-linked oligosaccharide from growing alpha-1,4-glucan chains and the subsequent attachment of the oligosaccharide to the alpha-1,6 position. The protein is 1,4-alpha-glucan branching enzyme GlgB 1 (glgB1) of Streptomyces coelicolor (strain ATCC BAA-471 / A3(2) / M145).